The sequence spans 226 residues: Putative type II restriction enzyme MjaVIP (226 aa).

It belongs to the BsaWI type II restriction endonuclease family.

It carries out the reaction Endonucleolytic cleavage of DNA to give specific double-stranded fragments with terminal 5'-phosphates.. Functionally, a P subtype restriction enzyme that recognizes the double-stranded sequence 5'-CCGG-3'; the cleavage site is unknown. The protein is Putative type II restriction enzyme MjaVIP (mjaVIRP) of Methanocaldococcus jannaschii (strain ATCC 43067 / DSM 2661 / JAL-1 / JCM 10045 / NBRC 100440) (Methanococcus jannaschii).